The chain runs to 341 residues: tRNA N6-adenosine threonylcarbamoyltransferase (341 aa).

The Fe cation site is built by His115 and His119. Substrate contacts are provided by residues Ile137–Gly141, Asp170, Gly183, Asp187, and Asn276. Asp304 is a Fe cation binding site.

This sequence belongs to the KAE1 / TsaD family. Fe(2+) serves as cofactor.

The protein localises to the cytoplasm. It carries out the reaction L-threonylcarbamoyladenylate + adenosine(37) in tRNA = N(6)-L-threonylcarbamoyladenosine(37) in tRNA + AMP + H(+). Functionally, required for the formation of a threonylcarbamoyl group on adenosine at position 37 (t(6)A37) in tRNAs that read codons beginning with adenine. Is involved in the transfer of the threonylcarbamoyl moiety of threonylcarbamoyl-AMP (TC-AMP) to the N6 group of A37, together with TsaE and TsaB. TsaD likely plays a direct catalytic role in this reaction. The sequence is that of tRNA N6-adenosine threonylcarbamoyltransferase from Staphylococcus aureus (strain MSSA476).